The primary structure comprises 178 residues: Large ribosomal subunit protein uL5 (178 aa).

Alanine 2 bears the N-acetylalanine mark. Lysine 38 participates in a covalent cross-link: Glycyl lysine isopeptide (Lys-Gly) (interchain with G-Cter in SUMO2). A phosphothreonine mark is found at threonine 44 and threonine 47. Lysine 52 carries the N6-acetyllysine; alternate modification. A Glycyl lysine isopeptide (Lys-Gly) (interchain with G-Cter in SUMO2); alternate cross-link involves residue lysine 52. N6-acetyllysine is present on lysine 85. A Glycyl lysine isopeptide (Lys-Gly) (interchain with G-Cter in SUMO2) cross-link involves residue lysine 154.

Belongs to the universal ribosomal protein uL5 family. As to quaternary structure, component of the large ribosomal subunit (LSU). Part of the 5S RNP complex, which is a LSU subcomplex composed of the 5S RNA, RPL5 and RPL11. Component of a hexameric 5S RNP precursor complex, composed of 5S RNA, RRS1, RPF2/BXDC1, RPL5, RPL11 and HEATR3; this complex acts as a precursor for ribosome assembly. Interacts with PML. Interacts with MDM2 (via its RanBP2-type zinc finger domain); negatively regulates MDM2-mediated TP53 ubiquitination and degradation. Interacts with NOP53; retains RPL11 into the nucleolus.

The protein resides in the nucleus. It is found in the nucleolus. Its subcellular location is the cytoplasm. In terms of biological role, component of the ribosome, a large ribonucleoprotein complex responsible for the synthesis of proteins in the cell. The small ribosomal subunit (SSU) binds messenger RNAs (mRNAs) and translates the encoded message by selecting cognate aminoacyl-transfer RNA (tRNA) molecules. The large subunit (LSU) contains the ribosomal catalytic site termed the peptidyl transferase center (PTC), which catalyzes the formation of peptide bonds, thereby polymerizing the amino acids delivered by tRNAs into a polypeptide chain. The nascent polypeptides leave the ribosome through a tunnel in the LSU and interact with protein factors that function in enzymatic processing, targeting, and the membrane insertion of nascent chains at the exit of the ribosomal tunnel. As part of the 5S RNP/5S ribonucleoprotein particle it is an essential component of the LSU, required for its formation and the maturation of rRNAs. It also couples ribosome biogenesis to p53/TP53 activation. As part of the 5S RNP it accumulates in the nucleoplasm and inhibits MDM2, when ribosome biogenesis is perturbed, mediating the stabilization and the activation of TP53. Promotes nucleolar location of PML. The chain is Large ribosomal subunit protein uL5 (RPL11) from Pongo abelii (Sumatran orangutan).